The following is a 174-amino-acid chain: ATP synthase subunit b (174 aa).

The helical transmembrane segment at 15 to 33 (NPGLVIWTLVTFSVVVFVL) threads the bilayer.

Belongs to the ATPase B chain family. In terms of assembly, F-type ATPases have 2 components, F(1) - the catalytic core - and F(0) - the membrane proton channel. F(1) has five subunits: alpha(3), beta(3), gamma(1), delta(1), epsilon(1). F(0) has three main subunits: a(1), b(2) and c(10-14). The alpha and beta chains form an alternating ring which encloses part of the gamma chain. F(1) is attached to F(0) by a central stalk formed by the gamma and epsilon chains, while a peripheral stalk is formed by the delta and b chains.

The protein localises to the cell inner membrane. Functionally, f(1)F(0) ATP synthase produces ATP from ADP in the presence of a proton or sodium gradient. F-type ATPases consist of two structural domains, F(1) containing the extramembraneous catalytic core and F(0) containing the membrane proton channel, linked together by a central stalk and a peripheral stalk. During catalysis, ATP synthesis in the catalytic domain of F(1) is coupled via a rotary mechanism of the central stalk subunits to proton translocation. Its function is as follows. Component of the F(0) channel, it forms part of the peripheral stalk, linking F(1) to F(0). The protein is ATP synthase subunit b of Leptospira biflexa serovar Patoc (strain Patoc 1 / Ames).